The chain runs to 131 residues: Large ribosomal subunit protein bL17 (131 aa).

This sequence belongs to the bacterial ribosomal protein bL17 family. In terms of assembly, part of the 50S ribosomal subunit. Contacts protein L32.

The chain is Large ribosomal subunit protein bL17 from Shewanella baltica (strain OS223).